The following is a 443-amino-acid chain: D-lactate dehydrogenase (443 aa).

At 1 to 182 (MSWIDELSKI…GGKTIKNSSG (182 aa)) the chain is on the extracellular side. In terms of domain architecture, FAD-binding PCMH-type spans 32–209 (RAAENFVVVK…TKATIRLFPQ (178 aa)). A helical membrane pass occupies residues 183-203 (YSLLHLLVGSEGTLAVITKAT). The Cytoplasmic portion of the chain corresponds to 204–383 (IRLFPQMRDM…WEKSYFEFRK (180 aa)). The helical transmembrane segment at 384–404 (SLLSLAVSLGGVISGEHGIGA) threads the bilayer. The Extracellular segment spans residues 405–443 (VKLSELEELFPEQFELMRQIKLLFDPKNILNPGKVVRKL).

The protein belongs to the FAD-binding oxidoreductase/transferase type 4 family. FAD is required as a cofactor. Zn(2+) serves as cofactor.

It localises to the cell membrane. It carries out the reaction (R)-lactate + A = pyruvate + AH2. Functionally, catalyzes the dehydrogenation of (R)-lactate (D-lactate) to pyruvate. Is likely involved in the utilization of D-lactate as a sole source for both carbon and electrons for dissimilatory sulfate reduction. Cannot use L-lactate as substrate, and NAD(+), horse cytochrome c, methylene blue or dimethylnaphthoquinone as acceptors. Active in vitro with artificial electron acceptors such as 2,6-dichlorophenolindophenol (DCPIP); the physiological acceptor is not known, but potential acceptors include cytochromes or quinones. This is D-lactate dehydrogenase from Archaeoglobus fulgidus (strain ATCC 49558 / DSM 4304 / JCM 9628 / NBRC 100126 / VC-16).